The primary structure comprises 1003 residues: Spheroidin (1003 aa).

Ser2 carries the post-translational modification N-acetylserine; by host. Over residues 953–970 the composition is skewed to low complexity; that stretch reads DANSSSSDSCSDSSSSSE. The disordered stretch occupies residues 953 to 979; it reads DANSSSSDSCSDSSSSSESESDSDGCC.

As to quaternary structure, may form disulfide-bond-linked aggregates.

Functionally, major component of viral occlusion bodies, the protective complexes in which the virions are embedded in the cytoplasm of their insect hosts. The protein is Spheroidin of Amsacta (AmEPV).